Consider the following 478-residue polypeptide: RNA exonuclease 3 (478 aa).

An Exonuclease domain is found at 320–465; it reads VLALDCEMAF…EDAIAAMDVI (146 aa).

It belongs to the REXO1/REXO3 family.

The protein localises to the cytoplasm. It localises to the nucleus. Its function is as follows. 3' to 5' exoribonuclease required for proper 3' end maturation of MRP RNA and of the U5L snRNA. This is RNA exonuclease 3 (REX3) from Kluyveromyces lactis (strain ATCC 8585 / CBS 2359 / DSM 70799 / NBRC 1267 / NRRL Y-1140 / WM37) (Yeast).